Consider the following 548-residue polypeptide: T-complex protein 1 subunit theta (548 aa).

The residue at position 2 (A2) is an N-acetylalanine. S23 is modified (phosphoserine). Phosphotyrosine is present on Y30. Residues Y47 and G48 each contribute to the ADP site. D99 contributes to the Mg(2+) binding site. 4 residues coordinate ADP: G100, T101, N102, and F103. The ATP site is built by G100, T101, and N102. S162 carries the post-translational modification Phosphoserine. 3 residues coordinate ADP: M169, S170, and K171. 2 residues coordinate ATP: S170 and K171. Residues K224, K254, and K260 each participate in a glycyl lysine isopeptide (Lys-Gly) (interchain with G-Cter in SUMO2) cross-link. 2 positions are modified to phosphoserine: S269 and S317. Residues K318 and K400 each carry the N6-acetyllysine modification. G412 is an ADP binding site. Residue G412 coordinates ATP. Residue K459 forms a Glycyl lysine isopeptide (Lys-Gly) (interchain with G-Cter in SUMO1) linkage. Position 466 is an N6-acetyllysine (K466). D499 provides a ligand contact to ADP. ATP is bound by residues D499 and K504. Y505 carries the post-translational modification Phosphotyrosine. Residues 529 to 548 (PAGGPKPPSGKKDWDDDQND) form a disordered region. Residue K534 forms a Glycyl lysine isopeptide (Lys-Gly) (interchain with G-Cter in SUMO2) linkage. S537 carries the post-translational modification Phosphoserine. K539 participates in a covalent cross-link: Glycyl lysine isopeptide (Lys-Gly) (interchain with G-Cter in SUMO2).

Belongs to the TCP-1 chaperonin family. Component of the chaperonin-containing T-complex (TRiC), a hexadecamer composed of two identical back-to-back stacked rings enclosing a protein folding chamber. Each ring is made up of eight different subunits: TCP1/CCT1, CCT2, CCT3, CCT4, CCT5, CCT6A/CCT6, CCT7, CCT8. Interacts with PACRG. Interacts with DNAAF4. Interacts with synaptic plasticity regulator PANTS.

The protein localises to the cytoplasm. Its subcellular location is the cytoskeleton. It is found in the microtubule organizing center. It localises to the centrosome. The protein resides in the cilium basal body. The catalysed reaction is ATP + H2O = ADP + phosphate + H(+). Component of the chaperonin-containing T-complex (TRiC), a molecular chaperone complex that assists the folding of actin, tubulin and other proteins upon ATP hydrolysis. The TRiC complex mediates the folding of WRAP53/TCAB1, thereby regulating telomere maintenance. As part of the TRiC complex may play a role in the assembly of BBSome, a complex involved in ciliogenesis regulating transports vesicles to the cilia. This Mus musculus (Mouse) protein is T-complex protein 1 subunit theta (Cct8).